We begin with the raw amino-acid sequence, 381 residues long: Erythronate-4-phosphate dehydrogenase (381 aa).

Residues Ser45 and Thr66 each coordinate substrate. Residues Asp146 and Thr173 each contribute to the NAD(+) site. Arg206 is a catalytic residue. An NAD(+)-binding site is contributed by Asp230. The active site involves Glu235. His252 acts as the Proton donor in catalysis. Gly255 lines the NAD(+) pocket. Position 256 (Tyr256) interacts with substrate.

The protein belongs to the D-isomer specific 2-hydroxyacid dehydrogenase family. PdxB subfamily. Homodimer.

The protein resides in the cytoplasm. The catalysed reaction is 4-phospho-D-erythronate + NAD(+) = (R)-3-hydroxy-2-oxo-4-phosphooxybutanoate + NADH + H(+). Its pathway is cofactor biosynthesis; pyridoxine 5'-phosphate biosynthesis; pyridoxine 5'-phosphate from D-erythrose 4-phosphate: step 2/5. Functionally, catalyzes the oxidation of erythronate-4-phosphate to 3-hydroxy-2-oxo-4-phosphonooxybutanoate. This chain is Erythronate-4-phosphate dehydrogenase, found in Hahella chejuensis (strain KCTC 2396).